The sequence spans 432 residues: Glutamate-1-semialdehyde 2,1-aminomutase 2 (432 aa).

Lys-268 carries the post-translational modification N6-(pyridoxal phosphate)lysine.

The protein belongs to the class-III pyridoxal-phosphate-dependent aminotransferase family. HemL subfamily. In terms of assembly, homodimer. The cofactor is pyridoxal 5'-phosphate.

The protein resides in the cytoplasm. The catalysed reaction is (S)-4-amino-5-oxopentanoate = 5-aminolevulinate. It functions in the pathway porphyrin-containing compound metabolism; protoporphyrin-IX biosynthesis; 5-aminolevulinate from L-glutamyl-tRNA(Glu): step 2/2. The protein is Glutamate-1-semialdehyde 2,1-aminomutase 2 of Listeria welshimeri serovar 6b (strain ATCC 35897 / DSM 20650 / CCUG 15529 / CIP 8149 / NCTC 11857 / SLCC 5334 / V8).